A 294-amino-acid chain; its full sequence is Acetylglutamate kinase (294 aa).

Substrate is bound by residues 69 to 70, Arg91, and Asn190; that span reads GG.

This sequence belongs to the acetylglutamate kinase family. ArgB subfamily.

It is found in the cytoplasm. The catalysed reaction is N-acetyl-L-glutamate + ATP = N-acetyl-L-glutamyl 5-phosphate + ADP. Its pathway is amino-acid biosynthesis; L-arginine biosynthesis; N(2)-acetyl-L-ornithine from L-glutamate: step 2/4. In terms of biological role, catalyzes the ATP-dependent phosphorylation of N-acetyl-L-glutamate. The polypeptide is Acetylglutamate kinase (Mycobacterium bovis (strain ATCC BAA-935 / AF2122/97)).